We begin with the raw amino-acid sequence, 360 residues long: Phospho-N-acetylmuramoyl-pentapeptide-transferase (360 aa).

10 helical membrane passes run 21 to 41 (YITF…LWIG), 73 to 93 (TMGG…WADL), 98 to 118 (IWFV…DDYW), 132 to 152 (WKYF…YAVG), 168 to 188 (VMPQ…VGTS), 199 to 219 (GLAI…AWAT), 236 to 256 (AGEL…FLWY), 263 to 283 (VFMG…IAVL), 288 to 308 (LLLV…ILQV), and 338 to 358 (VIVR…VTLK).

It belongs to the glycosyltransferase 4 family. MraY subfamily. Mg(2+) is required as a cofactor.

Its subcellular location is the cell inner membrane. The catalysed reaction is UDP-N-acetyl-alpha-D-muramoyl-L-alanyl-gamma-D-glutamyl-meso-2,6-diaminopimeloyl-D-alanyl-D-alanine + di-trans,octa-cis-undecaprenyl phosphate = di-trans,octa-cis-undecaprenyl diphospho-N-acetyl-alpha-D-muramoyl-L-alanyl-D-glutamyl-meso-2,6-diaminopimeloyl-D-alanyl-D-alanine + UMP. It functions in the pathway cell wall biogenesis; peptidoglycan biosynthesis. Catalyzes the initial step of the lipid cycle reactions in the biosynthesis of the cell wall peptidoglycan: transfers peptidoglycan precursor phospho-MurNAc-pentapeptide from UDP-MurNAc-pentapeptide onto the lipid carrier undecaprenyl phosphate, yielding undecaprenyl-pyrophosphoryl-MurNAc-pentapeptide, known as lipid I. The protein is Phospho-N-acetylmuramoyl-pentapeptide-transferase of Actinobacillus pleuropneumoniae serotype 5b (strain L20).